The sequence spans 464 residues: GDNF family receptor alpha-2 (464 aa).

The first 21 residues, 1–21, serve as a signal peptide directing secretion; the sequence is MILANAFCLFFFLDETLRSLA. 14 cysteine pairs are disulfide-bonded: cysteine 40–cysteine 93, cysteine 47–cysteine 53, cysteine 63–cysteine 78, cysteine 95–cysteine 105, cysteine 161–cysteine 222, cysteine 168–cysteine 174, cysteine 185–cysteine 200, cysteine 195–cysteine 241, cysteine 224–cysteine 229, cysteine 251–cysteine 323, cysteine 258–cysteine 264, cysteine 275–cysteine 293, cysteine 285–cysteine 347, and cysteine 325–cysteine 335. The N-linked (GlcNAc...) asparagine glycan is linked to asparagine 52. N-linked (GlcNAc...) asparagine glycosylation is present at asparagine 357. Positions 363–392 are disordered; the sequence is MSPKGPTFSATQAPRVEKTPSLPDDLSDST. Positions 381-392 are enriched in low complexity; it reads TPSLPDDLSDST. A glycan (N-linked (GlcNAc...) asparagine) is linked at asparagine 413. Serine 443 carries the GPI-anchor amidated serine lipid modification. Positions 444–464 are cleaved as a propeptide — removed in mature form; it reads CRARLSTALTALPLLMVTLAQ.

Belongs to the GDNFR family. In terms of assembly, interacts with NRTN ligand and RET: forms a 2:2:2 ternary complex composed of NRTN ligand, GFRA2 and RET receptor. Also forms a 4:4:4 tetrameric complex composed of 4 copies of NRTN ligand, GFRA2 and RET receptor, which prevents endocytosis of RET. Interacts with SORL1. As to expression, neurons of the superior cervical and dorsal root ganglia, and adult brain and testis. Low level in the substantia nigra, spleen and adrenal gland. Isoform 1, isoform 2 and isoform 3 are all expressed in brain, liver, ileum, spleen, heart and kidney. In brain, isoform 1 is most abundant, isoform 2 slightly less and isoform 3 is lowest. No significant levels of isoform 1, isoform 2 or isoform 3 expression in testis.

The protein localises to the cell membrane. Functionally, receptor for neurturin (NRTN), a growth factor that supports the survival of sympathetic neurons. NRTN-binding leads to autophosphorylation and activation of the RET receptor. Also able to mediate GDNF signaling through the RET tyrosine kinase receptor. Participates in NRTN-induced 'Ser-727' phosphorylation of STAT3. This Mus musculus (Mouse) protein is GDNF family receptor alpha-2.